The primary structure comprises 1226 residues: Phosphatidylinositol 3,4,5-trisphosphate 5-phosphatase 2B (1226 aa).

The SH2 domain maps to 6 to 102 (WYHRDISRVR…GLVAPLLYPV (97 aa)). The tract at residues 106 to 144 (SEANDESSDGDDEKPGSTFANSPPRAISPTATSPPSSSA) is disordered. Positions 108–117 (ANDESSDGDD) are enriched in acidic residues. Residues 127-144 (SPPRAISPTATSPPSSSA) are compositionally biased toward low complexity. The NPXY motif motif lies at 906–909 (NPAY). Tyr909 carries the post-translational modification Phosphotyrosine. 2 disordered regions span residues 945 to 964 (RVTGSHGHGKRSARRSDFTE) and 985 to 1035 (SSAA…LSGK). Residues 1011-1025 (HSSNSSLQLQSHKNN) show a composition bias toward low complexity. The region spanning 1163 to 1226 (GAPETVRELL…ILENLPKIWD (64 aa)) is the SAM domain.

It belongs to the inositol 1,4,5-trisphosphate 5-phosphatase family. Post-translationally, tyrosine phosphorylated by the members of the SRC family after exposure to a diverse array of extracellular stimuli.

The protein localises to the cytoplasm. It is found in the cytosol. Its subcellular location is the cytoskeleton. It localises to the membrane. The protein resides in the cell projection. The protein localises to the filopodium. It is found in the lamellipodium. Its subcellular location is the nucleus. It localises to the nucleus speckle. It catalyses the reaction a 1,2-diacyl-sn-glycero-3-phospho-(1D-myo-inositol-3,4,5-trisphosphate) + H2O = a 1,2-diacyl-sn-glycero-3-phospho-(1D-myo-inositol-3,4-bisphosphate) + phosphate. Its function is as follows. Phosphatidylinositol (PtdIns) phosphatase that specifically hydrolyzes the 5-phosphate of phosphatidylinositol-3,4,5-trisphosphate (PtdIns(3,4,5)P3) to produce PtdIns(3,4)P2, thereby negatively regulating the PI3K (phosphoinositide 3-kinase) pathways. Plays a central role in regulation of PI3K-dependent insulin signaling, although the precise molecular mechanisms and signaling pathways remain unclear. Part of a signaling pathway that regulates actin cytoskeleton remodeling. Required for the maintenance and dynamic remodeling of actin structures as well as in endocytosis, having a major impact on ligand-induced EGFR internalization and degradation. Participates in regulation of cortical and submembraneous actin. Regulates cell adhesion and cell spreading. Acts as a negative regulator of the FC-gamma-RIIA receptor (FCGR2A). Mediates signaling from the FC-gamma-RIIB receptor (FCGR2B), playing a central role in terminating signal transduction from activating immune/hematopoietic cell receptor systems. May also hydrolyze PtdIns(1,3,4,5)P4, and could thus affect the levels of the higher inositol polyphosphates like InsP6. In Danio rerio (Zebrafish), this protein is Phosphatidylinositol 3,4,5-trisphosphate 5-phosphatase 2B (inppl1b).